Consider the following 745-residue polypeptide: Putative cryptochrome DASH, mitochondrial (745 aa).

The N-terminal 22 residues, 1–22 (MAPSKVVIYAMRRELRLSDNPI), are a transit peptide targeting the mitochondrion. One can recognise a Photolyase/cryptochrome alpha/beta domain in the interval 23–166 (FHHLSNPESK…DFKLWDDEKY (144 aa)). Disordered stretches follow at residues 563-688 (KFNL…GGGG) and 702-745 (GGYR…QTDA). Residues 571–584 (SKVKKRPFFRKRGT) are compositionally biased toward basic residues. A compositionally biased stretch (low complexity) spans 591–603 (GSAESPGSSDSHS). Gly residues predominate over residues 604–616 (GSGGSPDGSGGGN). Positions 632–648 (QQTHQGSGRSQSSSNHG) are enriched in low complexity. Gly residues-rich tracts occupy residues 672–688 (RGGG…GGGG) and 702–718 (GGYR…GGFR). The span at 735-745 (QQVASQFQTDA) shows a compositional bias: polar residues.

It belongs to the DNA photolyase class-1 family. The cofactor is FAD. Requires (6R)-5,10-methylene-5,6,7,8-tetrahydrofolate as cofactor.

Its subcellular location is the mitochondrion. Functionally, may have a photoreceptor function. In Neurospora crassa (strain ATCC 24698 / 74-OR23-1A / CBS 708.71 / DSM 1257 / FGSC 987), this protein is Putative cryptochrome DASH, mitochondrial (cry).